The chain runs to 433 residues: Protein arginine N-methyltransferase 2 (433 aa).

Residues 1-20 (MATSGDCPRSESQGEEPAEC) form a disordered region. Interaction with ESR1 regions lie at residues 1 to 277 (MATS…SALK) and 133 to 275 (KESL…NLSA). An SH3 domain is found at 30-89 (VQPEEFVAIADYAATDETQLSFLRGEKILILRQTTADWWWGERAGCCGYIPANHVGKHVD). Asymmetric dimethylarginine is present on residues arginine 61 and arginine 72. Positions 83 to 207 (HVGKHVDEYD…DVVLPEKVDV (125 aa)) are interaction with RB1. Positions 99–432 (DEEYFGSYGT…KVGEKVFPIW (334 aa)) constitute an SAM-dependent MTase PRMT-type domain. Positions 112, 121, 145, 168, and 197 each coordinate S-adenosyl-L-methionine. Residues glutamate 211 and glutamate 220 contribute to the active site.

This sequence belongs to the class I-like SAM-binding methyltransferase superfamily. Protein arginine N-methyltransferase family. Self-associates. Interacts with RB1 and E2F1. Interacts with NCOA6 coactivator. Interacts (via SH3 domain) with PRMT8. Interacts with AR. Interacts with NFKBIA. Interacts with ESR1, ESR2, PGR, PPARG, RARA, RXRA and THRB. Interacts with HNRNPUL1. As to expression, widely expressed. Highly expressed in androgen target organs such as heart, prostate, skeletal muscle, ovary and spinal cord.

It is found in the cytoplasm. It localises to the nucleus. Its subcellular location is the nucleolus. The catalysed reaction is L-arginyl-[protein] + 2 S-adenosyl-L-methionine = N(omega),N(omega)-dimethyl-L-arginyl-[protein] + 2 S-adenosyl-L-homocysteine + 2 H(+). Its function is as follows. Arginine methyltransferase that methylates the guanidino nitrogens of arginyl residues in proteins such as STAT3, FBL, histone H4. Acts as a coactivator (with NCOA2) of the androgen receptor (AR)-mediated transactivation. Acts as a coactivator (with estrogen) of estrogen receptor (ER)-mediated transactivation. Enhances PGR, PPARG, RARA-mediated transactivation. May inhibit NF-kappa-B transcription and promote apoptosis. Represses E2F1 transcriptional activity (in a RB1-dependent manner). May be involved in growth regulation. This chain is Protein arginine N-methyltransferase 2 (PRMT2), found in Homo sapiens (Human).